The following is a 347-amino-acid chain: Holliday junction branch migration complex subunit RuvB (347 aa).

The tract at residues 13-195 is large ATPase domain (RuvB-L); it reads NEDAVTSGEV…FGIVEHMQYY (183 aa). ATP is bound by residues Leu-34, Arg-35, Gly-76, Lys-79, Thr-80, Thr-81, 142 to 144, Arg-185, Tyr-195, and Arg-232; that span reads EDY. Thr-80 serves as a coordination point for Mg(2+). The interval 196-266 is small ATPAse domain (RuvB-S); it reads TIDELEKIVQ…TTEGALKQLQ (71 aa). Positions 269–347 are head domain (RuvB-H); it reads DEGLDQTDRR…QLGLPVPGDK (79 aa). Residue Arg-329 coordinates DNA.

It belongs to the RuvB family. In terms of assembly, homohexamer. Forms an RuvA(8)-RuvB(12)-Holliday junction (HJ) complex. HJ DNA is sandwiched between 2 RuvA tetramers; dsDNA enters through RuvA and exits via RuvB. An RuvB hexamer assembles on each DNA strand where it exits the tetramer. Each RuvB hexamer is contacted by two RuvA subunits (via domain III) on 2 adjacent RuvB subunits; this complex drives branch migration. In the full resolvosome a probable DNA-RuvA(4)-RuvB(12)-RuvC(2) complex forms which resolves the HJ.

The protein localises to the cytoplasm. The enzyme catalyses ATP + H2O = ADP + phosphate + H(+). Functionally, the RuvA-RuvB-RuvC complex processes Holliday junction (HJ) DNA during genetic recombination and DNA repair, while the RuvA-RuvB complex plays an important role in the rescue of blocked DNA replication forks via replication fork reversal (RFR). RuvA specifically binds to HJ cruciform DNA, conferring on it an open structure. The RuvB hexamer acts as an ATP-dependent pump, pulling dsDNA into and through the RuvAB complex. RuvB forms 2 homohexamers on either side of HJ DNA bound by 1 or 2 RuvA tetramers; 4 subunits per hexamer contact DNA at a time. Coordinated motions by a converter formed by DNA-disengaged RuvB subunits stimulates ATP hydrolysis and nucleotide exchange. Immobilization of the converter enables RuvB to convert the ATP-contained energy into a lever motion, pulling 2 nucleotides of DNA out of the RuvA tetramer per ATP hydrolyzed, thus driving DNA branch migration. The RuvB motors rotate together with the DNA substrate, which together with the progressing nucleotide cycle form the mechanistic basis for DNA recombination by continuous HJ branch migration. Branch migration allows RuvC to scan DNA until it finds its consensus sequence, where it cleaves and resolves cruciform DNA. The polypeptide is Holliday junction branch migration complex subunit RuvB (Lactobacillus helveticus (strain DPC 4571)).